A 549-amino-acid polypeptide reads, in one-letter code: Thermosome subunit (549 aa).

Residues 528-538 (EKEKEGEKGGG) are compositionally biased toward basic and acidic residues. The segment at 528 to 549 (EKEKEGEKGGGSEEFSGSSDLD) is disordered. The span at 540 to 549 (EEFSGSSDLD) shows a compositional bias: low complexity.

Belongs to the TCP-1 chaperonin family. As to quaternary structure, forms an oligomeric complex of eight-membered rings.

Its function is as follows. Molecular chaperone; binds unfolded polypeptides in vitro, and has a weak ATPase activity. This is Thermosome subunit (ths) from Pyrococcus horikoshii (strain ATCC 700860 / DSM 12428 / JCM 9974 / NBRC 100139 / OT-3).